A 227-amino-acid chain; its full sequence is Cytochrome c oxidase subunit 2 (227 aa).

The Mitochondrial intermembrane segment spans residues 1–14; that stretch reads MAYPFQLGLQDATS. The helical transmembrane segment at 15–45 threads the bilayer; the sequence is PIMEELMNFHDHTLMIVFLISTLVLYIISLM. Residues 46–59 lie on the Mitochondrial matrix side of the membrane; the sequence is LTTKLTHTSTMDAQ. Residues 60 to 87 traverse the membrane as a helical segment; that stretch reads EVETVWTILPAVILIMIALPSLRILYMM. The Mitochondrial intermembrane portion of the chain corresponds to 88-227; the sequence is DEINNPVLTV…HFENWSTSMI (140 aa). Cu cation contacts are provided by H161, C196, E198, C200, H204, and M207. E198 serves as a coordination point for Mg(2+).

Belongs to the cytochrome c oxidase subunit 2 family. Component of the cytochrome c oxidase (complex IV, CIV), a multisubunit enzyme composed of 14 subunits. The complex is composed of a catalytic core of 3 subunits MT-CO1, MT-CO2 and MT-CO3, encoded in the mitochondrial DNA, and 11 supernumerary subunits COX4I, COX5A, COX5B, COX6A, COX6B, COX6C, COX7A, COX7B, COX7C, COX8 and NDUFA4, which are encoded in the nuclear genome. The complex exists as a monomer or a dimer and forms supercomplexes (SCs) in the inner mitochondrial membrane with NADH-ubiquinone oxidoreductase (complex I, CI) and ubiquinol-cytochrome c oxidoreductase (cytochrome b-c1 complex, complex III, CIII), resulting in different assemblies (supercomplex SCI(1)III(2)IV(1) and megacomplex MCI(2)III(2)IV(2)). Found in a complex with TMEM177, COA6, COX18, COX20, SCO1 and SCO2. Interacts with TMEM177 in a COX20-dependent manner. Interacts with COX20. Interacts with COX16. Cu cation is required as a cofactor.

Its subcellular location is the mitochondrion inner membrane. It carries out the reaction 4 Fe(II)-[cytochrome c] + O2 + 8 H(+)(in) = 4 Fe(III)-[cytochrome c] + 2 H2O + 4 H(+)(out). Component of the cytochrome c oxidase, the last enzyme in the mitochondrial electron transport chain which drives oxidative phosphorylation. The respiratory chain contains 3 multisubunit complexes succinate dehydrogenase (complex II, CII), ubiquinol-cytochrome c oxidoreductase (cytochrome b-c1 complex, complex III, CIII) and cytochrome c oxidase (complex IV, CIV), that cooperate to transfer electrons derived from NADH and succinate to molecular oxygen, creating an electrochemical gradient over the inner membrane that drives transmembrane transport and the ATP synthase. Cytochrome c oxidase is the component of the respiratory chain that catalyzes the reduction of oxygen to water. Electrons originating from reduced cytochrome c in the intermembrane space (IMS) are transferred via the dinuclear copper A center (CU(A)) of subunit 2 and heme A of subunit 1 to the active site in subunit 1, a binuclear center (BNC) formed by heme A3 and copper B (CU(B)). The BNC reduces molecular oxygen to 2 water molecules using 4 electrons from cytochrome c in the IMS and 4 protons from the mitochondrial matrix. This chain is Cytochrome c oxidase subunit 2 (MT-CO2), found in Apodemus semotus (Taiwan field mouse).